The following is a 132-amino-acid chain: Fluoride-specific ion channel FluC 3 (132 aa).

Transmembrane regions (helical) follow at residues 4–24, 32–52, 66–86, and 95–115; these read ILLV…FGGW, FPVG…LIMY, IFLT…GYES, and LMLM…AVYL. 2 residues coordinate Na(+): G74 and T77.

It belongs to the fluoride channel Fluc/FEX (TC 1.A.43) family.

The protein localises to the cell membrane. The enzyme catalyses fluoride(in) = fluoride(out). With respect to regulation, na(+) is not transported, but it plays an essential structural role and its presence is essential for fluoride channel function. Fluoride-specific ion channel. Important for reducing fluoride concentration in the cell, thus reducing its toxicity. This is Fluoride-specific ion channel FluC 3 from Methanosarcina barkeri (strain Fusaro / DSM 804).